The chain runs to 324 residues: Beta-ketoacyl-[acyl-carrier-protein] synthase III (324 aa).

Active-site residues include Cys113 and His251. The interval Gln252–Arg256 is ACP-binding. Asn281 is a catalytic residue.

This sequence belongs to the thiolase-like superfamily. FabH family. As to quaternary structure, homodimer.

The protein localises to the cytoplasm. The enzyme catalyses malonyl-[ACP] + acetyl-CoA + H(+) = 3-oxobutanoyl-[ACP] + CO2 + CoA. It participates in lipid metabolism; fatty acid biosynthesis. Functionally, catalyzes the condensation reaction of fatty acid synthesis by the addition to an acyl acceptor of two carbons from malonyl-ACP. Catalyzes the first condensation reaction which initiates fatty acid synthesis and may therefore play a role in governing the total rate of fatty acid production. Possesses both acetoacetyl-ACP synthase and acetyl transacylase activities. Its substrate specificity determines the biosynthesis of branched-chain and/or straight-chain of fatty acids. The polypeptide is Beta-ketoacyl-[acyl-carrier-protein] synthase III (Bartonella tribocorum (strain CIP 105476 / IBS 506)).